A 42-amino-acid chain; its full sequence is Photosystem II reaction center protein J (42 aa).

A helical transmembrane segment spans residues 10–30; it reads IPLWLIATVAGILVLTVVGIF.

Belongs to the PsbJ family. PSII is composed of 1 copy each of membrane proteins PsbA, PsbB, PsbC, PsbD, PsbE, PsbF, PsbH, PsbI, PsbJ, PsbK, PsbL, PsbM, PsbT, PsbX, PsbY, PsbZ, Psb30/Ycf12, at least 3 peripheral proteins of the oxygen-evolving complex and a large number of cofactors. It forms dimeric complexes.

The protein localises to the plastid. The protein resides in the chloroplast thylakoid membrane. In terms of biological role, one of the components of the core complex of photosystem II (PSII). PSII is a light-driven water:plastoquinone oxidoreductase that uses light energy to abstract electrons from H(2)O, generating O(2) and a proton gradient subsequently used for ATP formation. It consists of a core antenna complex that captures photons, and an electron transfer chain that converts photonic excitation into a charge separation. This is Photosystem II reaction center protein J from Chara vulgaris (Common stonewort).